The chain runs to 335 residues: Transcription factor bHLH63 (335 aa).

The tract at residues 110–160 (MTMNRDDLVEEGEEEKSKITEQNNGSTKSIKKMKHKAKKEENNFSNDSSKV) is disordered. The 51-residue stretch at 178 to 228 (QATDSHSIAERVRREKISERMKFLQDLVPGCDKITGKAGMLDEIINYVQSL) folds into the bHLH domain.

In terms of assembly, homodimer. Interacts with IBH1. Binds reversibly to CRY2 after blue light illumination. As to expression, expressed constitutively in roots, leaves, and stems.

It is found in the nucleus. Functionally, transcription factor that binds DNA to G box 5'-CACGTG-3' and, to a lower extent, to E-box 5'-CANNTG-3' in vitro. Binds to chromatin DNA of the FT gene and promotes its expression, and thus triggers flowering in response to blue light. This is Transcription factor bHLH63 (BHLH63) from Arabidopsis thaliana (Mouse-ear cress).